The chain runs to 336 residues: Vacuolar protein sorting-associated protein 26B (336 aa).

S302, S304, and S319 each carry phosphoserine.

It belongs to the VPS26 family. As to quaternary structure, component of the heterotrimeric retromer cargo-selective complex (CSC), also described as vacuolar protein sorting subcomplex (VPS), formed by VPS26 (VPS26A or VPS26B), VPS29 and VPS35. The CSC has a highly elongated structure with VPS26 and VPS29 binding independently at opposite distal ends of VPS35 as central platform. The CSC is believed to associate with variable sorting nexins to form functionally distinct retromer complex variants. The originally described SNX-BAR retromer is a pentamer containing the CSC and a heterodimeric membrane-deforming subcomplex formed between SNX1 or SNX2 and SNX5 or SNX6 (also called SNX-BAR subcomplex); the respective CSC and SNX-BAR subcomplexes associate with low affinity. The CSC associates with SNX3 to form a SNX3-retromer complex. The CSC associates with SNX27, the WASH complex and the SNX-BAR subcomplex to form the SNX27-retromer complex. Interacts with VPS29, VPS35, TBC1D5, GOLPH3, SNX27. As to expression, ubiquitously expressed in developing embryo and adult. Highly expressed in brain.

The protein resides in the cytoplasm. It is found in the membrane. Its subcellular location is the early endosome. The protein localises to the late endosome. Acts as a component of the retromer cargo-selective complex (CSC). The CSC is believed to be the core functional component of retromer or respective retromer complex variants acting to prevent missorting of selected transmembrane cargo proteins into the lysosomal degradation pathway. The recruitment of the CSC to the endosomal membrane involves RAB7A and SNX3. The SNX-BAR retromer mediates retrograde transport of cargo proteins from endosomes to the trans-Golgi network (TGN) and is involved in endosome-to-plasma membrane transport for cargo protein recycling. The SNX3-retromer mediates the retrograde transport of WLS distinct from the SNX-BAR retromer pathway. The SNX27-retromer is believed to be involved in endosome-to-plasma membrane trafficking and recycling of a broad spectrum of cargo proteins. The CSC seems to act as recruitment hub for other proteins, such as the WASH complex and TBC1D5. May be involved in retrograde transport of SORT1 but not of IGF2R. Acts redundantly with VSP26A in SNX-27 mediated endocytic recycling of SLC2A1/GLUT1. This is Vacuolar protein sorting-associated protein 26B (Vps26b) from Mus musculus (Mouse).